Here is a 90-residue protein sequence, read N- to C-terminus: Evasin P1128 (90 aa).

The signal sequence occupies residues 1 to 18 (MFIALGIQLFVAVTYAAG). 3 cysteine pairs are disulfide-bonded: C29–C51, C33–C53, and C44–C64. A glycan (N-linked (GlcNAc...) asparagine) is linked at N32.

It is found in the secreted. Its function is as follows. Salivary chemokine-binding protein which binds to host chemokines CXCL1, CXCL2, CXCL3, CXCL5 and CXCL8. The chain is Evasin P1128 from Ixodes ricinus (Common tick).